A 418-amino-acid chain; its full sequence is Putative competence-damage inducible protein (418 aa).

This sequence belongs to the CinA family.

This Streptococcus pneumoniae (strain JJA) protein is Putative competence-damage inducible protein.